A 431-amino-acid chain; its full sequence is Adenylosuccinate synthetase (431 aa).

GTP is bound by residues 12-18 (GDEGKGK) and 40-42 (GHT). Catalysis depends on Asp-13, which acts as the Proton acceptor. Residues Asp-13 and Gly-40 each contribute to the Mg(2+) site. Residues 13–16 (DEGK), 38–41 (NAGH), Thr-131, Arg-145, Gln-225, Thr-240, and Arg-304 each bind IMP. His-41 acts as the Proton donor in catalysis. Residue 300–306 (TTTGRKR) participates in substrate binding. GTP-binding positions include Arg-306, 332–334 (KLD), and 414–416 (STS).

This sequence belongs to the adenylosuccinate synthetase family. As to quaternary structure, homodimer. The cofactor is Mg(2+).

The protein localises to the cytoplasm. It catalyses the reaction IMP + L-aspartate + GTP = N(6)-(1,2-dicarboxyethyl)-AMP + GDP + phosphate + 2 H(+). It participates in purine metabolism; AMP biosynthesis via de novo pathway; AMP from IMP: step 1/2. Functionally, plays an important role in the de novo pathway of purine nucleotide biosynthesis. Catalyzes the first committed step in the biosynthesis of AMP from IMP. The sequence is that of Adenylosuccinate synthetase from Jannaschia sp. (strain CCS1).